We begin with the raw amino-acid sequence, 151 residues long: uncharacterized protein (151 aa).

This is an uncharacterized protein from Homo sapiens (Human).